Consider the following 432-residue polypeptide: Homogentisate 1,2-dioxygenase (432 aa).

Histidine 287 serves as the catalytic Proton acceptor. Fe cation contacts are provided by histidine 330 and glutamate 336. Residues tyrosine 345 and histidine 366 each coordinate homogentisate. Position 366 (histidine 366) interacts with Fe cation.

The protein belongs to the homogentisate dioxygenase family. Hexamer; dimer of trimers. Fe cation serves as cofactor.

It carries out the reaction homogentisate + O2 = 4-maleylacetoacetate + H(+). It functions in the pathway amino-acid degradation; L-phenylalanine degradation; acetoacetate and fumarate from L-phenylalanine: step 4/6. Its function is as follows. Involved in the catabolism of homogentisate (2,5-dihydroxyphenylacetate or 2,5-OH-PhAc), a central intermediate in the degradation of phenylalanine and tyrosine. Catalyzes the oxidative ring cleavage of the aromatic ring of homogentisate to yield maleylacetoacetate. The sequence is that of Homogentisate 1,2-dioxygenase from Pseudomonas aeruginosa (strain ATCC 15692 / DSM 22644 / CIP 104116 / JCM 14847 / LMG 12228 / 1C / PRS 101 / PAO1).